The chain runs to 138 residues: Putative pre-16S rRNA nuclease (138 aa).

The protein belongs to the YqgF nuclease family.

It is found in the cytoplasm. Functionally, could be a nuclease involved in processing of the 5'-end of pre-16S rRNA. This Fusobacterium nucleatum subsp. nucleatum (strain ATCC 25586 / DSM 15643 / BCRC 10681 / CIP 101130 / JCM 8532 / KCTC 2640 / LMG 13131 / VPI 4355) protein is Putative pre-16S rRNA nuclease.